Here is a 125-residue protein sequence, read N- to C-terminus: Ino eighty subunit 5 (125 aa).

The residue at position 124 (Thr-124) is a Phosphothreonine.

In terms of assembly, component of the chromatin-remodeling INO80 complex, at least composed of ARP4, ARP5, ARP8, RVB1, RVB2, TAF14, NHP10, IES1, IES3, IES4, IES6, ACT1, IES2, IES5 and INO80.

It localises to the nucleus. The chain is Ino eighty subunit 5 (IES5) from Saccharomyces cerevisiae (strain ATCC 204508 / S288c) (Baker's yeast).